Here is a 385-residue protein sequence, read N- to C-terminus: Succinyl-diaminopimelate desuccinylase (385 aa).

His73 lines the Zn(2+) pocket. The active site involves Asp75. Asp106 is a binding site for Zn(2+). The active-site Proton acceptor is Glu141. Zn(2+) contacts are provided by Glu142, Glu170, and His359.

This sequence belongs to the peptidase M20A family. DapE subfamily. As to quaternary structure, homodimer. The cofactor is Zn(2+). Co(2+) is required as a cofactor.

It catalyses the reaction N-succinyl-(2S,6S)-2,6-diaminopimelate + H2O = (2S,6S)-2,6-diaminopimelate + succinate. The protein operates within amino-acid biosynthesis; L-lysine biosynthesis via DAP pathway; LL-2,6-diaminopimelate from (S)-tetrahydrodipicolinate (succinylase route): step 3/3. Functionally, catalyzes the hydrolysis of N-succinyl-L,L-diaminopimelic acid (SDAP), forming succinate and LL-2,6-diaminopimelate (DAP), an intermediate involved in the bacterial biosynthesis of lysine and meso-diaminopimelic acid, an essential component of bacterial cell walls. This chain is Succinyl-diaminopimelate desuccinylase, found in Methylorubrum extorquens (strain PA1) (Methylobacterium extorquens).